We begin with the raw amino-acid sequence, 452 residues long: Argininosuccinate lyase (452 aa).

Residues 431 to 452 (AFRKDSTGSTSPKWSFRAMRRA) form a disordered region.

This sequence belongs to the lyase 1 family. Argininosuccinate lyase subfamily.

The protein resides in the cytoplasm. It carries out the reaction 2-(N(omega)-L-arginino)succinate = fumarate + L-arginine. Its pathway is amino-acid biosynthesis; L-arginine biosynthesis; L-arginine from L-ornithine and carbamoyl phosphate: step 3/3. The sequence is that of Argininosuccinate lyase from Tremblaya princeps.